The following is a 387-amino-acid chain: Protein RecA, chromosomal (387 aa).

80-87 is an ATP binding site; it reads GPESSGKT. The interval 352–387 is disordered; that stretch reads EVAETTEDTSTKAKATKAKKEEKVVETEEIELELED. Acidic residues predominate over residues 378 to 387; that stretch reads TEEIELELED.

It belongs to the RecA family.

The protein resides in the cytoplasm. In terms of biological role, can catalyze the hydrolysis of ATP in the presence of single-stranded DNA, the ATP-dependent uptake of single-stranded DNA by duplex DNA, and the ATP-dependent hybridization of homologous single-stranded DNAs. It interacts with LexA causing its activation and leading to its autocatalytic cleavage. This is Protein RecA, chromosomal from Lactococcus lactis subsp. lactis (strain IL1403) (Streptococcus lactis).